The sequence spans 312 residues: Peroxidase (312 aa).

A signal peptide spans methionine 1–glycine 23. Glutamine 24 carries the post-translational modification Pyrrolidone carboxylic acid. Cystine bridges form between cysteine 34–cysteine 107, cysteine 67–cysteine 70, cysteine 113–cysteine 307, and cysteine 192–cysteine 218. Histidine 65 acts as the Proton acceptor in catalysis. 4 residues coordinate Ca(2+): aspartate 66, glycine 69, aspartate 71, and serine 73. Residue proline 155 coordinates substrate. Histidine 185 contacts heme b. Ca(2+) is bound at residue threonine 186. Ca(2+) is bound by residues aspartate 231, threonine 234, and aspartate 239. Asparagine 262 carries N-linked (GlcNAc...) asparagine glycosylation.

This sequence belongs to the peroxidase family. Classical plant (class III) peroxidase subfamily. Requires Ca(2+) as cofactor. Heme b is required as a cofactor. Root.

The protein localises to the secreted. It carries out the reaction 2 a phenolic donor + H2O2 = 2 a phenolic radical donor + 2 H2O. Functionally, removal of H(2)O(2), oxidation of toxic reductants, biosynthesis and degradation of lignin, suberization, auxin catabolism, response to environmental stresses such as wounding, pathogen attack and oxidative stress. These functions might be dependent on each isozyme/isoform in each plant tissue. Involved in defense response to powdery meldew fungus. In Triticum aestivum (Wheat), this protein is Peroxidase.